We begin with the raw amino-acid sequence, 914 residues long: MAYQGTGNHSPPGYDDGGHRLQDLPAGNNYEEEASRGLLSSQTGPFTGPFDDPQQRNLSPARPTSGYSLTETYAADAGYHDPYSAGGSVYSAQSGENPATAFGVPGRVASPYARSETSSTEAWRQRQAPGGAGSGGGGGLRRYATRKVKLVQGSVLSVDYPVPSAIQNAIQAKYRNDLEGGSEEFTHMRYTAATCDPNEFTLHNGYNLRPAMYNRHTELLIAITYYNEDKTLTARTLHGVMQNIRDIVNLKKSEFWNKGGPAWQKIVVCLVFDGIDPCDKDVLDVLATVGIYQDGVMKRDVDGKETVAHIFEYTTQLSVTPNQQLIRPTDDGPSTLPPVQMMFCLKQKNSKKINSHRWLFNAFGRILNPEVCILLDAGTKPGHKSLLALWEAFYNDKDLGGACGEIHAMLGKGWRNLINPLVAAQNFEYKISNILDKPLESSFGYVSVLPGAFSAYRFRAIMGRPLEQYFHGDHTLSKQLGKKGIEGMNIFKKNMFLAEDRILCFELVAKAGSKWHLSYVKASKGETDVPEGAAEFISQRRRWLNGSFAAGIYSLMHFGRMYKSGHNIIRMFFLHIQMLYNTFSTILTWFSLASYWLTTSVIMDLVGTPSASNGHTGFPFGKTATPIVNTIVKYAYLGFLLLQFILALGNRPKGSRFSYLASFVVFGIIQLYVVVDALYLVVRAFSGSAPMDFDTTHGVGAFLGSFFGSTGAGIIIIALAATFGLYFVASFMYMDPWHMFTSFPQYMAVQSSYINILNVYAFSNWHDVSWGTKGSDKADALPSAKTTKEGGKETVIEEIDKPQADIDSQFEATVKRALTPYVAPVEKDEKSLDDSYKSFRTRLVTFWIFSNALMAVCITSDGVDKFGFTNSATDRTSRFFQALLWSNAVVALFRFIGACWFLGKTGVMCCFARR.

Disordered stretches follow at residues 1-67 and 112-140; these read MAYQ…TSGY and YARS…GGGL. Residues 130–140 show a composition bias toward gly residues; it reads GGAGSGGGGGL. The next 7 helical transmembrane spans lie at 543 to 562, 586 to 606, 627 to 647, 662 to 682, 712 to 732, 843 to 863, and 882 to 902; these read WLNG…GRMY, ILTW…MDLV, IVNT…FILA, SFVV…YLVV, AGII…ASFM, LVTF…SDGV, and ALLW…CWFL.

It belongs to the chitin synthase family. Class III subfamily.

Its subcellular location is the cell membrane. The enzyme catalyses [(1-&gt;4)-N-acetyl-beta-D-glucosaminyl](n) + UDP-N-acetyl-alpha-D-glucosamine = [(1-&gt;4)-N-acetyl-beta-D-glucosaminyl](n+1) + UDP + H(+). Functionally, polymerizes chitin, a structural polymer of the cell wall and septum, by transferring the sugar moiety of UDP-GlcNAc to the non-reducing end of the growing chitin polymer. Plays an important role in septal growth or maintenance. Mediates colony spore formation. This Aspergillus niger (strain ATCC MYA-4892 / CBS 513.88 / FGSC A1513) protein is Chitin synthase B.